A 122-amino-acid chain; its full sequence is UPF0102 protein TTE1452 (122 aa).

It belongs to the UPF0102 family.

In Caldanaerobacter subterraneus subsp. tengcongensis (strain DSM 15242 / JCM 11007 / NBRC 100824 / MB4) (Thermoanaerobacter tengcongensis), this protein is UPF0102 protein TTE1452.